Here is an 806-residue protein sequence, read N- to C-terminus: mRNA 3'-end-processing protein RNA14 (806 aa).

Residues 1 to 187 (MSDDYDPTAV…SGPDNNKRKR (187 aa)) are disordered. Composition is skewed to basic and acidic residues over residues 33–43 (AAAKDPAHNEE) and 60–107 (QGDE…KPEN). The segment covering 108–118 (PSEEVAEDDDY) has biased composition (acidic residues). Residues 132 to 142 (AGGGSVGGTGI) show a composition bias toward gly residues. Over residues 170-181 (SSTSNNNNSGPD) the composition is skewed to low complexity. HAT repeat units follow at residues 221–253 (EKLDESRDIYERFLALYPLSAEIWIEYITLEMD), 255–286 (GEFKRLEQLFGRCLTRLPNLKLWNIYLTYVRR), 299–334 (EARTNIIKAFEFYLDHVGIDRESGNVWFEYLDFIKS), 345–378 (QKNDLTRKIYRKAIGIPLNNLSILWTAYTNFEYS), and 404–440 (VLENLMRGLDRSSVPKSGPRDEFQVRAWKKWIDWEKS). Residues 729 to 770 (KPKSRTDEDSDSERPSKRARRTSHGNDQGDKMEPFNLPQKID) are disordered. Positions 732–744 (SRTDEDSDSERPS) are enriched in basic and acidic residues.

The protein resides in the nucleus. The protein localises to the cytoplasm. Functionally, component of the cleavage factor IA (CFIA) complex, which is involved in the endonucleolytic cleavage during polyadenylation-dependent pre-mRNA 3'-end formation. This is mRNA 3'-end-processing protein RNA14 (RNA14) from Yarrowia lipolytica (strain CLIB 122 / E 150) (Yeast).